The sequence spans 272 residues: Glutamate racemase (272 aa).

Substrate-binding positions include 10 to 11 (DS) and 42 to 43 (YG). Cys73 serves as the catalytic Proton donor/acceptor. Residue 74-75 (NT) participates in substrate binding. Cys183 functions as the Proton donor/acceptor in the catalytic mechanism. 184–185 (TH) contributes to the substrate binding site.

It belongs to the aspartate/glutamate racemases family.

It carries out the reaction L-glutamate = D-glutamate. It participates in cell wall biogenesis; peptidoglycan biosynthesis. Functionally, provides the (R)-glutamate required for cell wall biosynthesis. This Leifsonia xyli subsp. xyli (strain CTCB07) protein is Glutamate racemase.